The following is a 141-amino-acid chain: MARLTSIIALFAVALLVADAYAYRTTITTVEVEENRQGREERCRQMSAREELRSCEQYLRQQSRDVLQMRGIENPWRREGGSFDECCRELKNVDEECRCDMLEEIAREEQRQARGQEGRQMLQKARNLPSMCGIRPQRCDF.

A signal peptide spans 1 to 22; sequence MARLTSIIALFAVALLVADAYA. Residues 23–35 constitute a propeptide that is removed on maturation; it reads YRTTITTVEVEEN. 4 disulfides stabilise this stretch: Cys-43–Cys-97, Cys-55–Cys-86, Cys-87–Cys-132, and Cys-99–Cys-139.

Belongs to the 2S seed storage albumins family. The mature protein consists of a small and a large chain linked by 2 disulfide bonds.

It localises to the vacuole. The protein localises to the aleurone grain. In terms of biological role, this is a 2S seed storage protein. This is 2S seed storage albumin protein from Cucurbita maxima (Pumpkin).